The following is a 61-amino-acid chain: Small ribosomal subunit protein uS14B (61 aa).

Residues Cys24, Cys27, Cys40, and Cys43 each contribute to the Zn(2+) site.

It belongs to the universal ribosomal protein uS14 family. Zinc-binding uS14 subfamily. In terms of assembly, part of the 30S ribosomal subunit. Contacts proteins S3 and S10. The cofactor is Zn(2+).

In terms of biological role, binds 16S rRNA, required for the assembly of 30S particles and may also be responsible for determining the conformation of the 16S rRNA at the A site. This is Small ribosomal subunit protein uS14B from Mycobacterium ulcerans (strain Agy99).